Reading from the N-terminus, the 360-residue chain is Phospho-N-acetylmuramoyl-pentapeptide-transferase (360 aa).

The next 10 membrane-spanning stretches (helical) occupy residues 21-41 (YLSFRAILSVLTALGLSLWMG), 73-93 (TMGGVMILAAISITILLWANL), 94-114 (SNPYVWAVLAVLMGYGAVGFV), 132-152 (WKYFWQSAIALIVAFALYAYG), 168-188 (VMPQLGLMYIVLTYFVIVGTS), 199-219 (GLAIMPTVLVAAGFAVIAWAT), 236-256 (ASELVVVCTAIVGAGLGFLWF), 263-283 (VFMGDVGSLALGGALGTIAVL), 288-308 (LVLVIMGGVFVMETLSVILQV), and 338-358 (VIVRFWIISMVLVLIGLATLK).

This sequence belongs to the glycosyltransferase 4 family. MraY subfamily. Mg(2+) is required as a cofactor.

Its subcellular location is the cell inner membrane. It carries out the reaction UDP-N-acetyl-alpha-D-muramoyl-L-alanyl-gamma-D-glutamyl-meso-2,6-diaminopimeloyl-D-alanyl-D-alanine + di-trans,octa-cis-undecaprenyl phosphate = di-trans,octa-cis-undecaprenyl diphospho-N-acetyl-alpha-D-muramoyl-L-alanyl-D-glutamyl-meso-2,6-diaminopimeloyl-D-alanyl-D-alanine + UMP. It participates in cell wall biogenesis; peptidoglycan biosynthesis. Its function is as follows. Catalyzes the initial step of the lipid cycle reactions in the biosynthesis of the cell wall peptidoglycan: transfers peptidoglycan precursor phospho-MurNAc-pentapeptide from UDP-MurNAc-pentapeptide onto the lipid carrier undecaprenyl phosphate, yielding undecaprenyl-pyrophosphoryl-MurNAc-pentapeptide, known as lipid I. The chain is Phospho-N-acetylmuramoyl-pentapeptide-transferase from Vibrio vulnificus (strain CMCP6).